The following is a 683-amino-acid chain: Methionine--tRNA ligase (683 aa).

The 'HIGH' region signature appears at 15–25 (PYANGSIHLGH). Zn(2+) is bound by residues cysteine 146, cysteine 149, cysteine 159, and cysteine 162. The 'KMSKS' region motif lies at 332 to 336 (KMSKS). Lysine 335 contacts ATP. In terms of domain architecture, tRNA-binding spans 582-683 (DFAKVDLRIA…QGAQAGMRVM (102 aa)).

Belongs to the class-I aminoacyl-tRNA synthetase family. MetG type 1 subfamily. In terms of assembly, homodimer. Zn(2+) is required as a cofactor.

It is found in the cytoplasm. It carries out the reaction tRNA(Met) + L-methionine + ATP = L-methionyl-tRNA(Met) + AMP + diphosphate. Its function is as follows. Is required not only for elongation of protein synthesis but also for the initiation of all mRNA translation through initiator tRNA(fMet) aminoacylation. This is Methionine--tRNA ligase from Vibrio cholerae serotype O1 (strain ATCC 39315 / El Tor Inaba N16961).